The following is a 367-amino-acid chain: Oleoyl-acyl carrier protein thioesterase 2, chloroplastic (367 aa).

The transit peptide at 1-48 directs the protein to the chloroplast; the sequence is MLKLSCNVTDHIHNLFSNSRRIFVPVHRQTRPISCFQLKKEPLRAILS. Catalysis depends on residues N263, H265, and C300.

Belongs to the acyl-ACP thioesterase family.

The protein localises to the plastid. Its subcellular location is the chloroplast. It catalyses the reaction (9Z)-octadecenoyl-[ACP] + H2O = (9Z)-octadecenoate + holo-[ACP] + H(+). Plays an essential role in chain termination during de novo fatty acid synthesis. Possesses high thioesterase activity for oleoyl-ACP versus other acyl-ACPs. This is Oleoyl-acyl carrier protein thioesterase 2, chloroplastic (FATA2) from Arabidopsis thaliana (Mouse-ear cress).